A 242-amino-acid chain; its full sequence is Ras-like protein family member 11A (242 aa).

The segment at 17 to 241 (ESSSDYLLPK…SSKAKAASTL (225 aa)) is small GTPase-like. GTP-binding positions include 34–41 (GASCVGKS), 81–85 (DTPGG), and 147–150 (NKGD).

Belongs to the small GTPase superfamily. Ras family. Interacts with UBF/UBTF.

It is found in the nucleus. It localises to the nucleolus. It catalyses the reaction GTP + H2O = GDP + phosphate + H(+). Functionally, regulator of rDNA transcription. Acts in cooperation UBF/UBTF and positively regulates RNA polymerase I transcription. The polypeptide is Ras-like protein family member 11A (Rattus norvegicus (Rat)).